Here is a 658-residue protein sequence, read N- to C-terminus: CXXC-type zinc finger protein 1 (658 aa).

At Met-1 the chain carries N-acetylmethionine. A compositionally biased stretch (acidic residues) spans 1-14; the sequence is MEGDASDPEPPDAG. Positions 1 to 20 are disordered; that stretch reads MEGDASDPEPPDAGEDSKSE. Phosphoserine is present on residues Ser-6 and Ser-19. The PHD-type zinc finger occupies 28–76; the sequence is YCICRKPDINCFMIGCDNCNEWFHGDCIRITEKMAKAIREWYCRECREK. A disordered region spans residues 84–164; sequence YRHKKSRERD…HQQQQQQQQI (81 aa). The segment covering 90 to 120 has biased composition (basic and acidic residues); the sequence is RERDSSERDGSEPRDEGGGRKRPAPDPDLQR. Low complexity predominate over residues 153 to 163; sequence QHHQQQQQQQQ. The CXXC-type zinc finger occupies 162–211; that stretch reads QQIKRSARMCGECEACRRTEDCGHCDFCRDMKKFGGPNKIRQKCRLRQCQ. 8 residues coordinate Zn(2+): Cys-171, Cys-174, Cys-177, Cys-183, Cys-186, Cys-189, Cys-205, and Cys-210. Disordered stretches follow at residues 221–285 and 327–373; these read FPSS…SDED and VKVK…DPAS. Ser-226 is modified (phosphoserine). The residue at position 229 (Thr-229) is a Phosphothreonine. Residue Lys-252 forms a Glycyl lysine isopeptide (Lys-Gly) (interchain with G-Cter in SUMO2) linkage. Over residues 327 to 336 the composition is skewed to basic residues; sequence VKVKHVKRRE. Residues 337 to 347 are compositionally biased toward basic and acidic residues; sequence KKSEKKKDERY. The span at 348 to 360 shows a compositional bias: basic residues; that stretch reads KRHRQKQKHKDKW. The segment covering 361–370 has biased composition (basic and acidic residues); sequence KHPERADAKD. Positions 428–470 form a coiled coil; the sequence is GKKLLERIRREQQSARTRLQEMERRFHELEAIILRAKQQAVRE.

Component of the SET1 complex, at least composed of the catalytic subunit (SETD1A or SETD1B), WDR5, WDR82, RBBP5, ASH2L/ASH2, CXXC1/CFP1, HCFC1 and DPY30. Interacts with SETD1A. Interacts with ZNF335. Interacts with PRDM9; this interaction does not link PRDM9-activated recombination hotspot sites with DSB machinery and is not required for the hotspot recognition pathway. Interacts with histone H3K4me3. Post-translationally, may be regulated by proteolysis.

It is found in the nucleus speckle. It localises to the nucleus. Functionally, transcriptional activator that exhibits a unique DNA binding specificity for CpG unmethylated motifs with a preference for CpGG. This Bos taurus (Bovine) protein is CXXC-type zinc finger protein 1 (CXXC1).